A 713-amino-acid polypeptide reads, in one-letter code: Glycine--tRNA ligase beta subunit (713 aa).

Belongs to the class-II aminoacyl-tRNA synthetase family. Tetramer of two alpha and two beta subunits.

Its subcellular location is the cytoplasm. It carries out the reaction tRNA(Gly) + glycine + ATP = glycyl-tRNA(Gly) + AMP + diphosphate. In Picosynechococcus sp. (strain ATCC 27264 / PCC 7002 / PR-6) (Agmenellum quadruplicatum), this protein is Glycine--tRNA ligase beta subunit.